Reading from the N-terminus, the 128-residue chain is Sulfurtransferase TusD (128 aa).

Cys78 serves as the catalytic Cysteine persulfide intermediate.

It belongs to the DsrE/TusD family. In terms of assembly, heterohexamer, formed by a dimer of trimers. The hexameric TusBCD complex contains 2 copies each of TusB, TusC and TusD. The TusBCD complex interacts with TusE.

It localises to the cytoplasm. Part of a sulfur-relay system required for 2-thiolation of 5-methylaminomethyl-2-thiouridine (mnm(5)s(2)U) at tRNA wobble positions. Accepts sulfur from TusA and transfers it in turn to TusE. This chain is Sulfurtransferase TusD, found in Escherichia coli (strain 55989 / EAEC).